The following is a 264-amino-acid chain: Protein GrpE (264 aa).

The span at 36–49 (KVQSKKVSSDHSSS) shows a compositional bias: basic and acidic residues. A disordered region spans residues 36-59 (KVQSKKVSSDHSSSEDNASSDINS). Residues 50–59 (EDNASSDINS) are compositionally biased toward low complexity.

The protein belongs to the GrpE family. Homodimer.

It is found in the cytoplasm. Functionally, participates actively in the response to hyperosmotic and heat shock by preventing the aggregation of stress-denatured proteins, in association with DnaK and GrpE. It is the nucleotide exchange factor for DnaK and may function as a thermosensor. Unfolded proteins bind initially to DnaJ; upon interaction with the DnaJ-bound protein, DnaK hydrolyzes its bound ATP, resulting in the formation of a stable complex. GrpE releases ADP from DnaK; ATP binding to DnaK triggers the release of the substrate protein, thus completing the reaction cycle. Several rounds of ATP-dependent interactions between DnaJ, DnaK and GrpE are required for fully efficient folding. In Peanut witches'-broom phytoplasma, this protein is Protein GrpE.